Reading from the N-terminus, the 598-residue chain is Peptidoglycan D,D-transpeptidase FtsI homolog (598 aa).

Residues Ile-12–Leu-33 form a helical membrane-spanning segment. Ser-291 serves as the catalytic Acyl-ester intermediate.

Belongs to the transpeptidase family.

The protein localises to the plastid. It is found in the chloroplast membrane. The catalysed reaction is Preferential cleavage: (Ac)2-L-Lys-D-Ala-|-D-Ala. Also transpeptidation of peptidyl-alanyl moieties that are N-acyl substituents of D-alanine.. This is Peptidoglycan D,D-transpeptidase FtsI homolog (ftsI) from Mesostigma viride (Green alga).